The primary structure comprises 326 residues: tRNA-dihydrouridine(20/20a) synthase (326 aa).

FMN is bound by residues 11–13 (PML) and Q63. Residue C93 is the Proton donor of the active site. FMN-binding positions include K132, H165, 205–207 (NGG), and 227–228 (GR).

This sequence belongs to the Dus family. DusA subfamily. It depends on FMN as a cofactor.

The catalysed reaction is 5,6-dihydrouridine(20) in tRNA + NADP(+) = uridine(20) in tRNA + NADPH + H(+). It carries out the reaction 5,6-dihydrouridine(20) in tRNA + NAD(+) = uridine(20) in tRNA + NADH + H(+). It catalyses the reaction 5,6-dihydrouridine(20a) in tRNA + NADP(+) = uridine(20a) in tRNA + NADPH + H(+). The enzyme catalyses 5,6-dihydrouridine(20a) in tRNA + NAD(+) = uridine(20a) in tRNA + NADH + H(+). Its function is as follows. Catalyzes the synthesis of 5,6-dihydrouridine (D), a modified base found in the D-loop of most tRNAs, via the reduction of the C5-C6 double bond in target uridines. Specifically modifies U20 and U20a in tRNAs. In Vibrio parahaemolyticus serotype O3:K6 (strain RIMD 2210633), this protein is tRNA-dihydrouridine(20/20a) synthase.